The following is a 459-amino-acid chain: MNRLPSSASALACSAHALNLIEKRTLNHEEMKALNREVIDYFKEHVNPGFLEYRKSVTAGGDYGAVEWQAGSLNTLVDTQGQEFIDCLGGFGIFNVGHRNPVVVSAVQNQLAKQPLHSQELLDPLRAMLAKTLAALTPGKLKYSFFCNSGTESVEAALKLAKAYQSPRGKFTFIATSGAFHGKSLGALSATAKSTFRRPFMPLLPGFRHVPFGNIDAMSMAFSEGKKTGDEIAAVILEPIQGEGGVILPPQGYLTEVRKLCDEFGALMILDEVQTGMGRTGKMFACEHENVQPDILCLAKALGGGVMPIGATIATEEVFSVLFDNPFLHTTTFGGNPLACAAALATINVLLEQNLPAQAEQKGDTLLDGFRQLAREYPNLVHDARGKGMLIAIEFVDNETGYRFASEMFRQRVLVAGTLNNAKTIRIEPPLTLTIELCEQVLKSARNALAAMQVSVEEV.

Pyridoxal 5'-phosphate-binding positions include 150–151 (GT) and glutamine 274. N6-(pyridoxal phosphate)lysine is present on lysine 300. Position 332 (threonine 332) interacts with pyridoxal 5'-phosphate.

It belongs to the class-III pyridoxal-phosphate-dependent aminotransferase family. Putrescine aminotransferase subfamily. Pyridoxal 5'-phosphate is required as a cofactor.

The enzyme catalyses an alkane-alpha,omega-diamine + 2-oxoglutarate = an omega-aminoaldehyde + L-glutamate. It catalyses the reaction putrescine + 2-oxoglutarate = 1-pyrroline + L-glutamate + H2O. It carries out the reaction cadaverine + 2-oxoglutarate = 5-aminopentanal + L-glutamate. It functions in the pathway amine and polyamine degradation; putrescine degradation; 4-aminobutanal from putrescine (transaminase route): step 1/1. Its function is as follows. Catalyzes the aminotransferase reaction from putrescine to 2-oxoglutarate, leading to glutamate and 4-aminobutanal, which spontaneously cyclizes to form 1-pyrroline. This is the first step in one of two pathways for putrescine degradation, where putrescine is converted into 4-aminobutanoate (gamma-aminobutyrate or GABA) via 4-aminobutanal. Also functions as a cadaverine transaminase in a a L-lysine degradation pathway to succinate that proceeds via cadaverine, glutarate and L-2-hydroxyglutarate. The polypeptide is Putrescine aminotransferase (Salmonella dublin (strain CT_02021853)).